A 190-amino-acid chain; its full sequence is Putative hydrolase YdeN (190 aa).

Catalysis depends on charge relay system residues Ser71, Asp137, and His164.

The protein belongs to the RBBP9 family.

This Bacillus subtilis (strain 168) protein is Putative hydrolase YdeN (ydeN).